The chain runs to 194 residues: Putative 3-methyladenine DNA glycosylase (194 aa).

This sequence belongs to the DNA glycosylase MPG family.

This chain is Putative 3-methyladenine DNA glycosylase, found in Aeropyrum pernix (strain ATCC 700893 / DSM 11879 / JCM 9820 / NBRC 100138 / K1).